Here is a 213-residue protein sequence, read N- to C-terminus: 3,4-dihydroxy-2-butanone 4-phosphate synthase (213 aa).

Residues 37–38 (RE), D42, 150–154 (RPGHT), and E174 each bind D-ribulose 5-phosphate. Residue E38 participates in Mg(2+) binding. H153 is a Mg(2+) binding site.

The protein belongs to the DHBP synthase family. In terms of assembly, homodimer. It depends on Mg(2+) as a cofactor. Mn(2+) is required as a cofactor.

It carries out the reaction D-ribulose 5-phosphate = (2S)-2-hydroxy-3-oxobutyl phosphate + formate + H(+). The protein operates within cofactor biosynthesis; riboflavin biosynthesis; 2-hydroxy-3-oxobutyl phosphate from D-ribulose 5-phosphate: step 1/1. Catalyzes the conversion of D-ribulose 5-phosphate to formate and 3,4-dihydroxy-2-butanone 4-phosphate. This Clostridium botulinum (strain Langeland / NCTC 10281 / Type F) protein is 3,4-dihydroxy-2-butanone 4-phosphate synthase.